A 404-amino-acid chain; its full sequence is Putative Peroxidase 48 (404 aa).

The N-terminal stretch at 1–18 (MRFLGDYKFALLTCSVIA) is a signal peptide. 4 cysteine pairs are disulfide-bonded: Cys-77–Cys-156, Cys-110–Cys-115, Cys-162–Cys-397, and Cys-241–Cys-273. His-108 serves as the catalytic Proton acceptor. Asp-109, Ile-112, Gly-114, Asp-116, and Ser-118 together coordinate Ca(2+). Residue Asn-136 is glycosylated (N-linked (GlcNAc...) asparagine). Pro-204 contacts substrate. Residue His-234 coordinates heme b. A Ca(2+)-binding site is contributed by Ser-235. The N-linked (GlcNAc...) asparagine glycan is linked to Asn-250. The disordered stretch occupies residues 276 to 307 (SVSTSSPSAPPDIGLPPSLPASDSENSYGMSS). Over residues 283–294 (SAPPDIGLPPSL) the composition is skewed to pro residues. Asp-287 is a binding site for Ca(2+). Residues 296–307 (ASDSENSYGMSS) show a composition bias toward polar residues.

This sequence belongs to the peroxidase family. Classical plant (class III) peroxidase subfamily. Heme b is required as a cofactor. Ca(2+) serves as cofactor.

Its subcellular location is the secreted. The catalysed reaction is 2 a phenolic donor + H2O2 = 2 a phenolic radical donor + 2 H2O. Functionally, removal of H(2)O(2), oxidation of toxic reductants, biosynthesis and degradation of lignin, suberization, auxin catabolism, response to environmental stresses such as wounding, pathogen attack and oxidative stress. These functions might be dependent on each isozyme/isoform in each plant tissue. In Arabidopsis thaliana (Mouse-ear cress), this protein is Putative Peroxidase 48 (PER48).